Consider the following 376-residue polypeptide: uncharacterized protein (376 aa).

The chain crosses the membrane as a helical span at residues Y24–C44. A Zn(2+)-binding site is contributed by H251.

The protein belongs to the peptidase M23B family. Zn(2+) is required as a cofactor.

It localises to the cell membrane. This is an uncharacterized protein from Buchnera aphidicola subsp. Baizongia pistaciae (strain Bp).